Here is a 371-residue protein sequence, read N- to C-terminus: tRNA 2-selenouridine synthase (371 aa).

Residues 12 to 135 (FLDDVPMMDM…MRTFLLDTTQ (124 aa)) form the Rhodanese domain. Residue Cys95 is the S-selanylcysteine intermediate of the active site.

The protein belongs to the SelU family. Monomer.

The enzyme catalyses 5-methylaminomethyl-2-thiouridine(34) in tRNA + selenophosphate + (2E)-geranyl diphosphate + H2O + H(+) = 5-methylaminomethyl-2-selenouridine(34) in tRNA + (2E)-thiogeraniol + phosphate + diphosphate. The catalysed reaction is 5-methylaminomethyl-2-thiouridine(34) in tRNA + (2E)-geranyl diphosphate = 5-methylaminomethyl-S-(2E)-geranyl-thiouridine(34) in tRNA + diphosphate. It carries out the reaction 5-methylaminomethyl-S-(2E)-geranyl-thiouridine(34) in tRNA + selenophosphate + H(+) = 5-methylaminomethyl-2-(Se-phospho)selenouridine(34) in tRNA + (2E)-thiogeraniol. It catalyses the reaction 5-methylaminomethyl-2-(Se-phospho)selenouridine(34) in tRNA + H2O = 5-methylaminomethyl-2-selenouridine(34) in tRNA + phosphate. Involved in the post-transcriptional modification of the uridine at the wobble position (U34) of tRNA(Lys), tRNA(Glu) and tRNA(Gln). Catalyzes the conversion of 2-thiouridine (S2U-RNA) to 2-selenouridine (Se2U-RNA). Acts in a two-step process involving geranylation of 2-thiouridine (S2U) to S-geranyl-2-thiouridine (geS2U) and subsequent selenation of the latter derivative to 2-selenouridine (Se2U) in the tRNA chain. The chain is tRNA 2-selenouridine synthase from Pseudomonas entomophila (strain L48).